Here is a 262-residue protein sequence, read N- to C-terminus: 2-keto-4-pentenoate hydratase (262 aa).

The protein belongs to the hydratase/decarboxylase family. MhpD subfamily. Requires a divalent metal cation as cofactor.

It carries out the reaction (S)-4-hydroxy-2-oxopentanoate = (2Z)-2-hydroxypenta-2,4-dienoate + H2O. It participates in aromatic compound metabolism; 3-phenylpropanoate degradation. Functionally, catalyzes the conversion of 2-hydroxypentadienoic acid (enolic form of 2-oxopent-4-enoate) to 4-hydroxy-2-ketopentanoic acid. In Paraburkholderia phymatum (strain DSM 17167 / CIP 108236 / LMG 21445 / STM815) (Burkholderia phymatum), this protein is 2-keto-4-pentenoate hydratase.